A 586-amino-acid chain; its full sequence is CTP synthase 2 (586 aa).

The Glutamine amidotransferase type-1 domain maps to 300-554 (SIALVGKYTK…LAATGNLNAY (255 aa)). Active-site for GATase activity residues include C399, H526, and E528. A disordered region spans residues 563–586 (SSDRYSDASDDSFSEPRIAELEIS). A phosphoserine mark is found at S568, S571, and S574.

It belongs to the CTP synthase family.

It carries out the reaction UTP + L-glutamine + ATP + H2O = CTP + L-glutamate + ADP + phosphate + 2 H(+). The protein operates within pyrimidine metabolism; CTP biosynthesis via de novo pathway; CTP from UDP: step 2/2. In terms of biological role, catalyzes the ATP-dependent amination of UTP to CTP with either L-glutamine or ammonia as the source of nitrogen. Constitutes the rate-limiting enzyme in the synthesis of cytosine nucleotides. The protein is CTP synthase 2 (CTPS2) of Homo sapiens (Human).